A 45-amino-acid polypeptide reads, in one-letter code: Large ribosomal subunit protein bL34 (45 aa).

Residues 1-45 form a disordered region; that stretch reads MTKRTFGGTSRKRKRVSGFRVRMRSHTGRRVIKSRRKRGRERIAV. Basic residues predominate over residues 10–45; that stretch reads SRKRKRVSGFRVRMRSHTGRRVIKSRRKRGRERIAV.

Belongs to the bacterial ribosomal protein bL34 family.

This is Large ribosomal subunit protein bL34 from Prochlorococcus marinus subsp. pastoris (strain CCMP1986 / NIES-2087 / MED4).